Consider the following 137-residue polypeptide: Probable 4-amino-4-deoxy-L-arabinose-phosphoundecaprenol flippase subunit ArnF (137 aa).

Transmembrane regions (helical) follow at residues 43-63, 74-94, and 98-118; these read AIAV…FWLL, YSLL…LPFF, and FTVS…TINL.

Belongs to the ArnF family. Heterodimer of ArnE and ArnF.

Its subcellular location is the cell inner membrane. It participates in bacterial outer membrane biogenesis; lipopolysaccharide biosynthesis. Its function is as follows. Translocates 4-amino-4-deoxy-L-arabinose-phosphoundecaprenol (alpha-L-Ara4N-phosphoundecaprenol) from the cytoplasmic to the periplasmic side of the inner membrane. The polypeptide is Probable 4-amino-4-deoxy-L-arabinose-phosphoundecaprenol flippase subunit ArnF (Pseudomonas savastanoi pv. phaseolicola (strain 1448A / Race 6) (Pseudomonas syringae pv. phaseolicola (strain 1448A / Race 6))).